We begin with the raw amino-acid sequence, 151 residues long: UPF0178 protein Desal_2673 (151 aa).

The protein belongs to the UPF0178 family.

The chain is UPF0178 protein Desal_2673 from Maridesulfovibrio salexigens (strain ATCC 14822 / DSM 2638 / NCIMB 8403 / VKM B-1763) (Desulfovibrio salexigens).